A 1370-amino-acid chain; its full sequence is DNA-directed RNA polymerase subunit beta (1370 aa).

The protein belongs to the RNA polymerase beta chain family. As to quaternary structure, the RNAP catalytic core consists of 2 alpha, 1 beta, 1 beta' and 1 omega subunit. When a sigma factor is associated with the core the holoenzyme is formed, which can initiate transcription.

It catalyses the reaction RNA(n) + a ribonucleoside 5'-triphosphate = RNA(n+1) + diphosphate. In terms of biological role, DNA-dependent RNA polymerase catalyzes the transcription of DNA into RNA using the four ribonucleoside triphosphates as substrates. The chain is DNA-directed RNA polymerase subunit beta from Bordetella avium (strain 197N).